The following is a 163-amino-acid chain: Peptidyl-prolyl cis-trans isomerase (163 aa).

A PPIase cyclophilin-type domain is found at 5–162 (YFDVSSNGKP…SVLKIEDCGT (158 aa)).

Belongs to the cyclophilin-type PPIase family. PPIase A subfamily.

The protein resides in the cytoplasm. The catalysed reaction is [protein]-peptidylproline (omega=180) = [protein]-peptidylproline (omega=0). Its activity is regulated as follows. Binds cyclosporin A (CsA). CsA mediates some of its effects via an inhibitory action on PPIase. In terms of biological role, PPIases accelerate the folding of proteins. It catalyzes the cis-trans isomerization of proline imidic peptide bonds in oligopeptides. In Uromyces fabae (Rust fungus), this protein is Peptidyl-prolyl cis-trans isomerase (PIG28).